Reading from the N-terminus, the 602-residue chain is Elongation factor 4 (602 aa).

The region spanning 7–188 (ENIRNFSIIA…AIIDLVPPPK (182 aa)) is the tr-type G domain. GTP is bound by residues 19–24 (DHGKST) and 135–138 (NKID).

Belongs to the TRAFAC class translation factor GTPase superfamily. Classic translation factor GTPase family. LepA subfamily.

The protein localises to the cell inner membrane. It carries out the reaction GTP + H2O = GDP + phosphate + H(+). Functionally, required for accurate and efficient protein synthesis under certain stress conditions. May act as a fidelity factor of the translation reaction, by catalyzing a one-codon backward translocation of tRNAs on improperly translocated ribosomes. Back-translocation proceeds from a post-translocation (POST) complex to a pre-translocation (PRE) complex, thus giving elongation factor G a second chance to translocate the tRNAs correctly. Binds to ribosomes in a GTP-dependent manner. The sequence is that of Elongation factor 4 from Chlamydia pneumoniae (Chlamydophila pneumoniae).